A 190-amino-acid polypeptide reads, in one-letter code: Crossover junction endodeoxyribonuclease RuvC (190 aa).

Active-site residues include Asp8, Glu67, and Asp139. The Mg(2+) site is built by Asp8, Glu67, and Asp139.

The protein belongs to the RuvC family. As to quaternary structure, homodimer which binds Holliday junction (HJ) DNA. The HJ becomes 2-fold symmetrical on binding to RuvC with unstacked arms; it has a different conformation from HJ DNA in complex with RuvA. In the full resolvosome a probable DNA-RuvA(4)-RuvB(12)-RuvC(2) complex forms which resolves the HJ. Requires Mg(2+) as cofactor.

The protein resides in the cytoplasm. It catalyses the reaction Endonucleolytic cleavage at a junction such as a reciprocal single-stranded crossover between two homologous DNA duplexes (Holliday junction).. Its function is as follows. The RuvA-RuvB-RuvC complex processes Holliday junction (HJ) DNA during genetic recombination and DNA repair. Endonuclease that resolves HJ intermediates. Cleaves cruciform DNA by making single-stranded nicks across the HJ at symmetrical positions within the homologous arms, yielding a 5'-phosphate and a 3'-hydroxyl group; requires a central core of homology in the junction. The consensus cleavage sequence is 5'-(A/T)TT(C/G)-3'. Cleavage occurs on the 3'-side of the TT dinucleotide at the point of strand exchange. HJ branch migration catalyzed by RuvA-RuvB allows RuvC to scan DNA until it finds its consensus sequence, where it cleaves and resolves the cruciform DNA. The sequence is that of Crossover junction endodeoxyribonuclease RuvC from Actinobacillus succinogenes (strain ATCC 55618 / DSM 22257 / CCUG 43843 / 130Z).